The primary structure comprises 313 residues: Formimidoylglutamase (313 aa).

Residues histidine 130, aspartate 155, histidine 157, aspartate 159, aspartate 241, and aspartate 243 each contribute to the Mn(2+) site.

Belongs to the arginase family. Mn(2+) serves as cofactor.

It carries out the reaction N-formimidoyl-L-glutamate + H2O = formamide + L-glutamate. It functions in the pathway amino-acid degradation; L-histidine degradation into L-glutamate; L-glutamate from N-formimidoyl-L-glutamate (hydrolase route): step 1/1. Functionally, catalyzes the conversion of N-formimidoyl-L-glutamate to L-glutamate and formamide. The chain is Formimidoylglutamase from Salmonella arizonae (strain ATCC BAA-731 / CDC346-86 / RSK2980).